Reading from the N-terminus, the 139-residue chain is Nucleoside diphosphate kinase (139 aa).

ATP contacts are provided by K10, F58, R86, T92, R103, and N113. The active-site Pros-phosphohistidine intermediate is the H116.

This sequence belongs to the NDK family. Homotetramer. It depends on Mg(2+) as a cofactor.

The protein localises to the cytoplasm. It catalyses the reaction a 2'-deoxyribonucleoside 5'-diphosphate + ATP = a 2'-deoxyribonucleoside 5'-triphosphate + ADP. It carries out the reaction a ribonucleoside 5'-diphosphate + ATP = a ribonucleoside 5'-triphosphate + ADP. Functionally, major role in the synthesis of nucleoside triphosphates other than ATP. The ATP gamma phosphate is transferred to the NDP beta phosphate via a ping-pong mechanism, using a phosphorylated active-site intermediate. This is Nucleoside diphosphate kinase from Nitratidesulfovibrio vulgaris (strain ATCC 29579 / DSM 644 / CCUG 34227 / NCIMB 8303 / VKM B-1760 / Hildenborough) (Desulfovibrio vulgaris).